The sequence spans 640 residues: Pleckstrin homology-like domain family B member 3 (640 aa).

Disordered stretches follow at residues 1–100 (MGTR…AARR), 162–189 (LEQQ…ERDR), 241–262 (LERE…VPDP), 387–412 (GLQR…RPLS), and 476–504 (REGT…PHPP). Over residues 76-90 (PPIAMAATPPASTSS) the composition is skewed to low complexity. Residues 104–327 (QQLEALTRVA…ERSRLLELNC (224 aa)) are a coiled coil. A compositionally biased stretch (basic and acidic residues) spans 170 to 189 (QRGRQQREQEQRRLSQERDR). Positions 454 to 481 (DIAHMERLLQQAMAERERLLKAREGTRR) form a coiled coil. A compositionally biased stretch (pro residues) spans 495 to 504 (TAPPTPPHPP). Residues 532 to 635 (GCCCRGPLVK…WMDVIVTAAD (104 aa)) form the PH domain.

The chain is Pleckstrin homology-like domain family B member 3 (PHLDB3) from Homo sapiens (Human).